Consider the following 337-residue polypeptide: Glucokinase (337 aa).

Residue 11–16 coordinates ATP; that stretch reads ADIGGT.

This sequence belongs to the bacterial glucokinase family.

The protein resides in the cytoplasm. It catalyses the reaction D-glucose + ATP = D-glucose 6-phosphate + ADP + H(+). This chain is Glucokinase, found in Xylella fastidiosa (strain 9a5c).